A 247-amino-acid polypeptide reads, in one-letter code: tRNA (guanine-N(1)-)-methyltransferase (247 aa).

S-adenosyl-L-methionine contacts are provided by residues G116 and 135–140; that span reads IGDYVL.

It belongs to the RNA methyltransferase TrmD family. In terms of assembly, homodimer.

It localises to the cytoplasm. It catalyses the reaction guanosine(37) in tRNA + S-adenosyl-L-methionine = N(1)-methylguanosine(37) in tRNA + S-adenosyl-L-homocysteine + H(+). Specifically methylates guanosine-37 in various tRNAs. The sequence is that of tRNA (guanine-N(1)-)-methyltransferase from Symbiobacterium thermophilum (strain DSM 24528 / JCM 14929 / IAM 14863 / T).